The following is a 119-amino-acid chain: Secreted RxLR effector protein RXLR-C04 (119 aa).

A signal peptide spans 1-22; the sequence is MRLSYIFVVVATIITNCDIASA. The short motif at 40–77 is the RxLR-dEER element; it reads RILRQTNDSDDLEPIRHAMLDMELLEKIAKDPKYAEEV. Residue asparagine 46 is glycosylated (N-linked (GlcNAc...) asparagine).

The protein belongs to the RxLR effector family.

The protein resides in the secreted. It localises to the host cytoplasm. It is found in the host nucleus. Secreted effector that suppresses pattern-triggered immunity (PTI) in plant host. The chain is Secreted RxLR effector protein RXLR-C04 from Plasmopara halstedii (Downy mildew of sunflower).